The primary structure comprises 33 residues: Cytochrome b6-f complex subunit 8 (33 aa).

A helical transmembrane segment spans residues 2–22 (LISLGWAALAATFTFSIAMVV).

The protein belongs to the PetN family. In terms of assembly, the 4 large subunits of the cytochrome b6-f complex are cytochrome b6, subunit IV (17 kDa polypeptide, PetD), cytochrome f and the Rieske protein, while the 4 small subunits are PetG, PetL, PetM and PetN. The complex functions as a dimer.

The protein localises to the cellular thylakoid membrane. In terms of biological role, component of the cytochrome b6-f complex, which mediates electron transfer between photosystem II (PSII) and photosystem I (PSI), cyclic electron flow around PSI, and state transitions. This chain is Cytochrome b6-f complex subunit 8, found in Synechococcus sp. (strain RCC307).